Consider the following 654-residue polypeptide: Acetyl-coenzyme A synthetase (654 aa).

Residues 196-199 and threonine 316 contribute to the CoA site; that span reads RGGK. ATP contacts are provided by residues 392–394, 416–421, aspartate 507, and arginine 522; these read GEP and DTWWQT. Serine 530 is a CoA binding site. Arginine 533 lines the ATP pocket. Mg(2+) is bound by residues valine 544 and valine 549. Lysine 619 carries the post-translational modification N6-acetyllysine.

Belongs to the ATP-dependent AMP-binding enzyme family. It depends on Mg(2+) as a cofactor. Post-translationally, acetylated. Deacetylation by the SIR2-homolog deacetylase activates the enzyme.

It catalyses the reaction acetate + ATP + CoA = acetyl-CoA + AMP + diphosphate. Its function is as follows. Catalyzes the conversion of acetate into acetyl-CoA (AcCoA), an essential intermediate at the junction of anabolic and catabolic pathways. AcsA undergoes a two-step reaction. In the first half reaction, AcsA combines acetate with ATP to form acetyl-adenylate (AcAMP) intermediate. In the second half reaction, it can then transfer the acetyl group from AcAMP to the sulfhydryl group of CoA, forming the product AcCoA. The chain is Acetyl-coenzyme A synthetase from Chromobacterium violaceum (strain ATCC 12472 / DSM 30191 / JCM 1249 / CCUG 213 / NBRC 12614 / NCIMB 9131 / NCTC 9757 / MK).